The following is a 587-amino-acid chain: Bifunctional lycopene cyclase/phytoene synthase (587 aa).

The lycopene beta-cyclase stretch occupies residues 1-236 (MGLDYILVHV…IVFGLVCIDY (236 aa)). 7 consecutive transmembrane segments (helical) span residues 5-25 (YILVHVTYNIPLAGILTLVYW), 35-55 (KISTLVIISLVATIPWDSYLV), 65-85 (NGVIGWTLYDIPSEEVFFFII), 91-111 (SLVYLILTRWLVLPMYLGTVA), 116-136 (LIGASILLLAISVGLIALCFG), 145-165 (IITWAGPFLLIQWVFSSGFII), and 218-238 (LFFLITNIVIVFGLVCIDYAI). Residues 243-587 (CELVQSPQAV…VAYRAMAWRK (345 aa)) form a phytoene synthase region.

In the N-terminal section; belongs to the lycopene beta-cyclase family. The protein in the C-terminal section; belongs to the phytoene/squalene synthase family.

Its subcellular location is the membrane. It carries out the reaction all-trans-lycopene = gamma-carotene. The catalysed reaction is gamma-carotene = all-trans-beta-carotene. The enzyme catalyses 2 (2E,6E,10E)-geranylgeranyl diphosphate = 15-cis-phytoene + 2 diphosphate. The protein operates within carotenoid biosynthesis; beta-carotene biosynthesis. It participates in carotenoid biosynthesis; phytoene biosynthesis; all-trans-phytoene from geranylgeranyl diphosphate: step 1/1. Its function is as follows. Bifunctional enzyme that catalyzes the reactions from geranylgeranyl diphosphate to phytoene (phytoene synthase) and lycopene to beta-carotene via the intermediate gamma-carotene (lycopene cyclase). The protein is Bifunctional lycopene cyclase/phytoene synthase of Aspergillus oryzae (strain ATCC 42149 / RIB 40) (Yellow koji mold).